The sequence spans 244 residues: Ureidoacrylate amidohydrolase RutB (244 aa).

Catalysis depends on aspartate 38, which acts as the Proton acceptor. The active site involves lysine 147. The Nucleophile role is filled by cysteine 180.

It belongs to the isochorismatase family. RutB subfamily.

It catalyses the reaction (Z)-3-ureidoacrylate + H2O + H(+) = (Z)-3-aminoacrylate + NH4(+) + CO2. The catalysed reaction is (Z)-3-ureidoacrylate + H2O = (Z)-3-aminoacrylate + carbamate + H(+). It carries out the reaction (Z)-2-methylureidoacrylate + H2O + H(+) = (Z)-2-methylaminoacrylate + NH4(+) + CO2. Its function is as follows. Hydrolyzes ureidoacrylate to form aminoacrylate and carbamate. The carbamate hydrolyzes spontaneously, thereby releasing one of the nitrogen atoms of the pyrimidine ring as ammonia and one of its carbon atoms as CO2. In Escherichia coli O55:H7 (strain CB9615 / EPEC), this protein is Ureidoacrylate amidohydrolase RutB.